Here is a 284-residue protein sequence, read N- to C-terminus: MAIDAQKLVVVIVIVVVPLLFKFIIGPKTKPVLDPKRNDFQSFPLVEKTILTHNTSMYKFGLPHADDVLGLPIGQHIVIKANINGKDITRSYTPTSLDGDTKGNFELLVKSYPTGNVSKMIGELKIGDSIQIKGPRGNYHYERNCRSHLGMIAGGTGIAPMYQIMKAIAMDSHDTTKVSLVFGNVHEEDILLKKELEALVAMKPSQFKIVYYLDSPDREDWAGGVGYITKDVIKEHLPAATVDNVQILICGPPAMVASVRRSTVDLGFRRSKPLSKMEDQVFVF.

Residues 7–27 (KLVVVIVIVVVPLLFKFIIGP) form a helical membrane-spanning segment. Residues 38 to 142 (NDFQSFPLVE…KGPRGNYHYE (105 aa)) form the FAD-binding FR-type domain. 148-180 (HLGMIAGGTGIAPMYQIMKAIAMDSHDTTKVSL) provides a ligand contact to FAD.

It belongs to the flavoprotein pyridine nucleotide cytochrome reductase family. In terms of assembly, monomer. Component of the 2-(3-amino-3-carboxypropyl)histidine synthase complex composed of DPH1, DPH2, KTI11/DPH3 and a NADH-dependent reductase, predominantly CBR1. Interacts with KTI11/DPH3. Interacts with STE20. It depends on FAD as a cofactor.

It localises to the mitochondrion outer membrane. The enzyme catalyses 2 Fe(III)-[cytochrome b5] + NADH = 2 Fe(II)-[cytochrome b5] + NAD(+) + H(+). It carries out the reaction 2 Fe(3+)-[Dph3] + NADH = 2 Fe(2+)-[Dph3] + NAD(+) + H(+). The protein operates within protein modification; peptidyl-diphthamide biosynthesis. With respect to regulation, competitively inhibited by NAD(+). Inhibited by mercurials such as p-chloromercuribenzoate (PCMB) and HgCl(2). Enzymatic activity increases under anaerobic conditions. In terms of biological role, NADH-dependent reductase for KTI11/DPH3 and cytochrome b5. Required for the first step of diphthamide biosynthesis, a post-translational modification of histidine which occurs in elongation factor 2. DPH1 and DPH2 transfer a 3-amino-3-carboxypropyl (ACP) group from S-adenosyl-L-methionine (SAM) to a histidine residue, the reaction is assisted by a reduction system comprising KTI11/DPH3 and a NADH-dependent reductase, predominantly CBR1. By reducing KTI11/DPH3, also involved in the formation of the tRNA wobble base modification mcm5s 2U (5-methoxycarbonylmethyl-2-thiouridine), mediated by the elongator complex. The cytochrome b5/NADH cytochrome b5 reductase electron transfer system supports the catalytic activity of several sterol biosynthetic enzymes. Plays a role in bud morphology. The sequence is that of NADH-cytochrome b5 reductase 1 (CBR1) from Saccharomyces cerevisiae (strain YJM789) (Baker's yeast).